The primary structure comprises 396 residues: tRNA-specific 2-thiouridylase MnmA (396 aa).

ATP is bound by residues 42 to 49 and Met68; that span reads GMSGGVDS. The tract at residues 128–130 is interaction with target base in tRNA; sequence NPD. Cys133 (nucleophile) is an active-site residue. Cys133 and Cys230 form a disulfide bridge. Gly158 is an ATP binding site. The segment at 180 to 182 is interaction with tRNA; that stretch reads KDQ. Cys230 serves as the catalytic Cysteine persulfide intermediate. Residues 342 to 343 form an interaction with tRNA region; that stretch reads RY.

This sequence belongs to the MnmA/TRMU family.

It localises to the cytoplasm. The enzyme catalyses S-sulfanyl-L-cysteinyl-[protein] + uridine(34) in tRNA + AH2 + ATP = 2-thiouridine(34) in tRNA + L-cysteinyl-[protein] + A + AMP + diphosphate + H(+). In terms of biological role, catalyzes the 2-thiolation of uridine at the wobble position (U34) of tRNA, leading to the formation of s(2)U34. The sequence is that of tRNA-specific 2-thiouridylase MnmA from Pseudoalteromonas atlantica (strain T6c / ATCC BAA-1087).